Consider the following 121-residue polypeptide: Basic phospholipase A2 VRV-PL-VIIIa (121 aa).

7 disulfides stabilise this stretch: cysteine 26–cysteine 115, cysteine 28–cysteine 44, cysteine 43–cysteine 95, cysteine 49–cysteine 121, cysteine 50–cysteine 88, cysteine 57–cysteine 81, and cysteine 75–cysteine 86. Tyrosine 27, glycine 29, and glycine 31 together coordinate Ca(2+). The active site involves histidine 47. Aspartate 48 is a binding site for Ca(2+). Residue aspartate 89 is part of the active site.

It belongs to the phospholipase A2 family. Group II subfamily. D49 sub-subfamily. As to quaternary structure, monomer. It depends on Ca(2+) as a cofactor. As to expression, expressed by the venom gland.

It localises to the secreted. It carries out the reaction a 1,2-diacyl-sn-glycero-3-phosphocholine + H2O = a 1-acyl-sn-glycero-3-phosphocholine + a fatty acid + H(+). Oxyphenbutazone (OPB), anisic acid and atropine inhibit the enzymatic activity by binding at the substrate-binding site. P-coumaric acid, resveratrol, spermidine, corticosterone and gramine derivative inhibit the enzymatic activity by binding at the substrate-binding site. Its function is as follows. Snake venom phospholipase A2 (PLA2) that shows weak neurotoxicity and medium anticoagulant effects by binding to factor Xa (F10) and inhibiting the prothrombinase activity (IC(50) is 130 nM). It also damages vital organs such as lung, liver and kidney, displays edema-inducing activities when injected into the foot pads of mice and induces necrosis of muscle cells when injected into the thigh muscle. Has a low enzymatic activity. PLA2 catalyzes the calcium-dependent hydrolysis of the 2-acyl groups in 3-sn-phosphoglycerides. This Daboia russelii (Russel's viper) protein is Basic phospholipase A2 VRV-PL-VIIIa.